Reading from the N-terminus, the 302-residue chain is MVTEQEVDAIGQTLVDPKQPLQARFRALFTLRGLGGPGAIAWISQAFDDDSALLKHELAYCLGQMQDARAIPMLVDVLQDTRQEPMVRHEAGEALGAIGDPEVLEILKQYSSDPVIEVAETCQLAVRRLEWLQQHGGEPAAGPYLSVDPAPPAEERDVGRLREALLDESRPLFERYRAMFALRNAGGEEAALALAEGLHCGSALFRHEVGYVLGQLQHEAAVPQLAAALARCTENPMVRHECAEALGAIARPACLAALQAHADDPERVVRESCEVALDMYEHETGRAFQYADGLEQLRGAPS.

At methionine 1 the chain carries N-acetylmethionine. HEAT-like PBS-type repeat units lie at residues 54 to 80, 87 to 113, 174 to 200, 205 to 231, and 238 to 264; these read LKHELAYCLGQMQDARAIPMLVDVLQD, VRHEAGEALGAIGDPEVLEILKQYSSD, ERYRAMFALRNAGGEEAALALAEGLHC, FRHEVGYVLGQLQHEAAVPQLAAALAR, and VRHECAEALGAIARPACLAALQAHADD. Fe cation-binding residues include histidine 56, histidine 89, and glutamate 90. Residues histidine 207, histidine 240, and glutamate 241 each contribute to the Fe cation site.

Belongs to the deoxyhypusine hydroxylase family. The cofactor is Fe(2+).

It carries out the reaction [eIF5A protein]-deoxyhypusine + AH2 + O2 = [eIF5A protein]-hypusine + A + H2O. The protein operates within protein modification; eIF5A hypusination. Functionally, catalyzes the hydroxylation of the N(6)-(4-aminobutyl)-L-lysine intermediate produced by deoxyhypusine synthase/DHPS on a critical lysine of the eukaryotic translation initiation factor 5A/eIF-5A. This is the second step of the post-translational modification of that lysine into an unusual amino acid residue named hypusine. Hypusination is unique to mature eIF-5A factor and is essential for its function. This chain is Deoxyhypusine hydroxylase, found in Homo sapiens (Human).